A 312-amino-acid chain; its full sequence is tRNA uridine(34) hydroxylase (312 aa).

A Rhodanese domain is found at 123-217 (SDPEVLLIDT…YLEEVPQEQS (95 aa)). The Cysteine persulfide intermediate role is filled by Cys-177. Residues 282 to 293 (ARERQKQIELAR) are compositionally biased toward basic and acidic residues. A disordered region spans residues 282 to 312 (ARERQKQIELARQRNQPHPLGRDPRQSTLEN).

The protein belongs to the TrhO family.

The enzyme catalyses uridine(34) in tRNA + AH2 + O2 = 5-hydroxyuridine(34) in tRNA + A + H2O. In terms of biological role, catalyzes oxygen-dependent 5-hydroxyuridine (ho5U) modification at position 34 in tRNAs. The sequence is that of tRNA uridine(34) hydroxylase from Pseudomonas aeruginosa (strain UCBPP-PA14).